Consider the following 130-residue polypeptide: uncharacterized protein (130 aa).

This is an uncharacterized protein from Aedes vexans (Inland floodwater mosquito).